Here is a 442-residue protein sequence, read N- to C-terminus: 3-phosphoshikimate 1-carboxyvinyltransferase (442 aa).

The 3-phosphoshikimate site is built by Lys25, Ser26, and Arg30. Lys25 serves as a coordination point for phosphoenolpyruvate. The phosphoenolpyruvate site is built by Gly96 and Arg124. 3-phosphoshikimate contacts are provided by Ser171, Ser172, Gln173, Ser203, Asp325, and Lys352. Residue Gln173 participates in phosphoenolpyruvate binding. Asp325 serves as the catalytic Proton acceptor. Residues Arg356, Arg400, and Lys425 each coordinate phosphoenolpyruvate.

It belongs to the EPSP synthase family. As to quaternary structure, monomer.

The protein localises to the cytoplasm. It catalyses the reaction 3-phosphoshikimate + phosphoenolpyruvate = 5-O-(1-carboxyvinyl)-3-phosphoshikimate + phosphate. The protein operates within metabolic intermediate biosynthesis; chorismate biosynthesis; chorismate from D-erythrose 4-phosphate and phosphoenolpyruvate: step 6/7. Catalyzes the transfer of the enolpyruvyl moiety of phosphoenolpyruvate (PEP) to the 5-hydroxyl of shikimate-3-phosphate (S3P) to produce enolpyruvyl shikimate-3-phosphate and inorganic phosphate. In Bordetella parapertussis (strain 12822 / ATCC BAA-587 / NCTC 13253), this protein is 3-phosphoshikimate 1-carboxyvinyltransferase.